We begin with the raw amino-acid sequence, 450 residues long: UDP-N-acetylmuramoylalanine--D-glutamate ligase (450 aa).

ATP is bound at residue Gly-118–Thr-124.

This sequence belongs to the MurCDEF family.

It localises to the cytoplasm. The catalysed reaction is UDP-N-acetyl-alpha-D-muramoyl-L-alanine + D-glutamate + ATP = UDP-N-acetyl-alpha-D-muramoyl-L-alanyl-D-glutamate + ADP + phosphate + H(+). The protein operates within cell wall biogenesis; peptidoglycan biosynthesis. Cell wall formation. Catalyzes the addition of glutamate to the nucleotide precursor UDP-N-acetylmuramoyl-L-alanine (UMA). The protein is UDP-N-acetylmuramoylalanine--D-glutamate ligase of Pseudomonas putida (strain ATCC 47054 / DSM 6125 / CFBP 8728 / NCIMB 11950 / KT2440).